The following is a 92-amino-acid chain: Indole-3-acetic acid-induced protein ARG7 (92 aa).

Belongs to the ARG7 family.

The chain is Indole-3-acetic acid-induced protein ARG7 (ARG7) from Vigna radiata var. radiata (Mung bean).